The chain runs to 685 residues: Eukaryotic peptide chain release factor GTP-binding subunit (685 aa).

3 disordered regions span residues 1–34 (MSDS…GYQA), 63–99 (YNPD…GGRG), and 112–234 (GYQA…NVTS). S2 carries the post-translational modification N-acetylserine. The segment at 2–239 (SDSNQGNNQQ…ANVTSADALI (238 aa)) is interaction with PAB1. Positions 5-135 (NQGNNQQNYQ…LNDFQKQQKQ (131 aa)) are prion domain (PrD). A compositionally biased stretch (polar residues) spans 117–129 (FQPQSQGMSLNDF). The tract at residues 139 to 249 (KPKKTLKLVS…KEQEEEVDDE (111 aa)) is charged. Over residues 166–222 (AESDKKEEEKSAETKEPTKEPTKVEEPVKKEEKPVQTEEKTEEKSELPKVEDLKISE) the composition is skewed to basic and acidic residues. Polar residues predominate over residues 223-234 (STHNTNNANVTS). The tr-type G domain occupies 258–484 (KDHVSLIFMG…YLDTMNHVDR (227 aa)). Residues 267–274 (GHVDAGKS) form a G1 region. 267–274 (GHVDAGKS) provides a ligand contact to GTP. The segment at 323–327 (GKTIE) is G2. Residues 344-347 (DAPG) form a G3 region. GTP-binding positions include 406–409 (NKMD) and 449–450 (GY). The tract at residues 406 to 409 (NKMD) is G4. The tract at residues 448-450 (SGY) is G5. S571 is subject to Phosphoserine.

The protein belongs to the TRAFAC class translation factor GTPase superfamily. Classic translation factor GTPase family. ERF3 subfamily. As to quaternary structure, heterodimer of two subunits, one of which binds GTP. Interacts with polyadenylate-binding protein PAB1, and TPA1.

It localises to the cytoplasm. The catalysed reaction is GTP + H2O = GDP + phosphate + H(+). Functionally, GTPase component of the eRF1-eRF3-GTP ternary complex, a ternary complex that mediates translation termination in response to the termination codons UAA, UAG and UGA. SUP35/eRF3 mediates SUP45/eRF1 delivery to stop codons: The eRF1-eRF3-GTP complex binds to a stop codon in the ribosomal A-site. GTP hydrolysis by SUP35/eRF3 induces a conformational change that leads to its dissociation, permitting SUP45/eRF1 to accommodate fully in the A-site. Recruited by polyadenylate-binding protein PAB1 to poly(A)-tails of mRNAs. Interaction with PAB1 is also required for regulation of normal mRNA decay through translation termination-coupled poly(A) shortening. This chain is Eukaryotic peptide chain release factor GTP-binding subunit (SUP35), found in Saccharomyces cerevisiae (strain ATCC 204508 / S288c) (Baker's yeast).